Here is a 408-residue protein sequence, read N- to C-terminus: DNA primase DnaG (408 aa).

In terms of domain architecture, Toprim spans Asp172–Pro248. The Mg(2+) site is built by Glu178, Asp222, and Asp224. Residues Ala279–Glu304 are disordered.

The protein belongs to the archaeal DnaG primase family. Forms a ternary complex with MCM helicase and DNA. Component of the archaeal exosome complex. Requires Mg(2+) as cofactor.

The catalysed reaction is ssDNA + n NTP = ssDNA/pppN(pN)n-1 hybrid + (n-1) diphosphate.. Functionally, RNA polymerase that catalyzes the synthesis of short RNA molecules used as primers for DNA polymerase during DNA replication. Also part of the exosome, which is a complex involved in RNA degradation. Acts as a poly(A)-binding protein that enhances the interaction between heteromeric, adenine-rich transcripts and the exosome. The polypeptide is DNA primase DnaG (Pyrobaculum aerophilum (strain ATCC 51768 / DSM 7523 / JCM 9630 / CIP 104966 / NBRC 100827 / IM2)).